An 89-amino-acid chain; its full sequence is Protein YxiC (89 aa).

This is Protein YxiC (yxiC) from Bacillus subtilis (strain 168).